The following is a 328-amino-acid chain: Putative thiosulfate sulfurtransferase mpst-1 (328 aa).

2 consecutive Rhodanese domains span residues 22–162 (NKEG…EVST) and 202–320 (KTSE…KKIS). Cysteine 278 serves as the catalytic Cysteine persulfide intermediate.

It carries out the reaction thiosulfate + hydrogen cyanide = thiocyanate + sulfite + 2 H(+). This is Putative thiosulfate sulfurtransferase mpst-1 (mpst-1) from Caenorhabditis elegans.